The chain runs to 138 residues: Thyrotropin subunit beta (138 aa).

The N-terminal stretch at Met1–Ser20 is a signal peptide. Disulfide bonds link Cys22/Cys72, Cys36/Cys87, Cys39/Cys125, Cys47/Cys103, Cys51/Cys105, and Cys108/Cys115. N-linked (GlcNAc...) asparagine glycosylation is present at Asn43. Positions Val133 to Ile138 are excised as a propeptide.

Belongs to the glycoprotein hormones subunit beta family. In terms of assembly, heterodimer of a common alpha chain and a unique beta chain which confers biological specificity to thyrotropin, lutropin, follitropin and gonadotropin.

The protein resides in the secreted. Functionally, indispensable for the control of thyroid structure and metabolism. The polypeptide is Thyrotropin subunit beta (TSHB) (Lama glama (Llama)).